Reading from the N-terminus, the 123-residue chain is Small ribosomal subunit protein uS13 (123 aa).

It belongs to the universal ribosomal protein uS13 family. As to quaternary structure, part of the 30S ribosomal subunit. Forms a loose heterodimer with protein S19. Forms two bridges to the 50S subunit in the 70S ribosome.

Functionally, located at the top of the head of the 30S subunit, it contacts several helices of the 16S rRNA. In the 70S ribosome it contacts the 23S rRNA (bridge B1a) and protein L5 of the 50S subunit (bridge B1b), connecting the 2 subunits; these bridges are implicated in subunit movement. Contacts the tRNAs in the A and P-sites. This is Small ribosomal subunit protein uS13 from Neorickettsia sennetsu (strain ATCC VR-367 / Miyayama) (Ehrlichia sennetsu).